Reading from the N-terminus, the 144-residue chain is Sec-independent protein translocase protein TatB (144 aa).

The chain crosses the membrane as a helical span at residues 1 to 21 (MFEIGFWELVLVAIIGIVVVG). Positions 97–144 (KMIDEPPYQEPPPAAHSVQTDAEAYRDTGIEPADKSSSPEHHHDDAAR) are disordered. The segment covering 119 to 144 (EAYRDTGIEPADKSSSPEHHHDDAAR) has biased composition (basic and acidic residues).

It belongs to the TatB family. In terms of assembly, the Tat system comprises two distinct complexes: a TatABC complex, containing multiple copies of TatA, TatB and TatC subunits, and a separate TatA complex, containing only TatA subunits. Substrates initially bind to the TatABC complex, which probably triggers association of the separate TatA complex to form the active translocon.

The protein resides in the cell inner membrane. Functionally, part of the twin-arginine translocation (Tat) system that transports large folded proteins containing a characteristic twin-arginine motif in their signal peptide across membranes. Together with TatC, TatB is part of a receptor directly interacting with Tat signal peptides. TatB may form an oligomeric binding site that transiently accommodates folded Tat precursor proteins before their translocation. This chain is Sec-independent protein translocase protein TatB, found in Dichelobacter nodosus (strain VCS1703A).